A 257-amino-acid polypeptide reads, in one-letter code: Ribonuclease HII (257 aa).

One can recognise an RNase H type-2 domain in the interval 72–257; that stretch reads TYIAGIDEVG…FAPIKDMIQK (186 aa). 3 residues coordinate a divalent metal cation: aspartate 78, glutamate 79, and aspartate 170.

Belongs to the RNase HII family. Mn(2+) is required as a cofactor. The cofactor is Mg(2+).

It is found in the cytoplasm. It carries out the reaction Endonucleolytic cleavage to 5'-phosphomonoester.. Functionally, endonuclease that specifically degrades the RNA of RNA-DNA hybrids. The chain is Ribonuclease HII from Bacillus mycoides (strain KBAB4) (Bacillus weihenstephanensis).